We begin with the raw amino-acid sequence, 507 residues long: Probable Xaa-Pro aminopeptidase TRV_02643 (507 aa).

Positions 275, 286, 434, and 478 each coordinate Mn(2+).

It belongs to the peptidase M24B family. Mn(2+) serves as cofactor.

It catalyses the reaction Release of any N-terminal amino acid, including proline, that is linked to proline, even from a dipeptide or tripeptide.. Catalyzes the removal of a penultimate prolyl residue from the N-termini of peptides. The sequence is that of Probable Xaa-Pro aminopeptidase TRV_02643 from Trichophyton verrucosum (strain HKI 0517).